The sequence spans 213 residues: THAP domain-containing protein 1 (213 aa).

The THAP-type zinc-finger motif lies at 1 to 81; it reads MVQSCSAYGC…LKENAVPTIF (81 aa). The HCFC1-binding motif (HBM) motif lies at 134-137; it reads DHNY. Positions 139-185 are involved in homodimer formation; sequence VEDTMHQRKRIHQLEQQVEKLRKKLKTAQQRCRRQERQLEKLKEVVH. Residues 139–190 are a coiled coil; that stretch reads VEDTMHQRKRIHQLEQQVEKLRKKLKTAQQRCRRQERQLEKLKEVVHFQKEK.

It belongs to the THAP1 family. Homodimer. Interacts with PAWR. Component of a THAP1/THAP3-HCFC1-OGT complex that contains, either THAP1 or THAP3, HCFC1 and OGT. Interacts with OGT. Interacts (via the HBM) with HCFC1 (via the Kelch-repeat domain); the interaction recruits HCFC1 to the RRM1 promoter. As to expression, highly expressed in heart, skeletal muscle, kidney and liver. Weaker expression in brain and placenta.

It localises to the nucleus. The protein localises to the nucleoplasm. The protein resides in the PML body. In terms of biological role, DNA-binding transcription regulator that regulates endothelial cell proliferation and G1/S cell-cycle progression. Specifically binds the 5'-[AT]NTNN[GT]GGCA[AGT]-3' core DNA sequence and acts by modulating expression of pRB-E2F cell-cycle target genes, including RRM1. Component of a THAP1/THAP3-HCFC1-OGT complex that is required for the regulation of the transcriptional activity of RRM1. May also have pro-apoptotic activity by potentiating both serum-withdrawal and TNF-induced apoptosis. In Homo sapiens (Human), this protein is THAP domain-containing protein 1 (THAP1).